Reading from the N-terminus, the 87-residue chain is MAGKSSGDRRKPLRGAKGGKNAAPAKSIRVGVIDYKDVATLRKFISERGKIRARRITGVSVQEQRLIARAVKNAREMALLPYAGSGR.

The span at 1 to 10 (MAGKSSGDRR) shows a compositional bias: basic and acidic residues. The segment at 1-23 (MAGKSSGDRRKPLRGAKGGKNAA) is disordered.

It belongs to the bacterial ribosomal protein bS18 family. Part of the 30S ribosomal subunit. Forms a tight heterodimer with protein bS6.

In terms of biological role, binds as a heterodimer with protein bS6 to the central domain of the 16S rRNA, where it helps stabilize the platform of the 30S subunit. In Clavibacter michiganensis subsp. michiganensis (strain NCPPB 382), this protein is Small ribosomal subunit protein bS18.